We begin with the raw amino-acid sequence, 156 residues long: Small ribosomal subunit protein uS7 (156 aa).

It belongs to the universal ribosomal protein uS7 family. As to quaternary structure, part of the 30S ribosomal subunit. Contacts proteins S9 and S11.

One of the primary rRNA binding proteins, it binds directly to 16S rRNA where it nucleates assembly of the head domain of the 30S subunit. Is located at the subunit interface close to the decoding center, probably blocks exit of the E-site tRNA. The chain is Small ribosomal subunit protein uS7 from Dinoroseobacter shibae (strain DSM 16493 / NCIMB 14021 / DFL 12).